The primary structure comprises 372 residues: Cobalt-precorrin-5B C(1)-methyltransferase (372 aa).

Belongs to the CbiD family.

It catalyses the reaction Co-precorrin-5B + S-adenosyl-L-methionine = Co-precorrin-6A + S-adenosyl-L-homocysteine. The protein operates within cofactor biosynthesis; adenosylcobalamin biosynthesis; cob(II)yrinate a,c-diamide from sirohydrochlorin (anaerobic route): step 6/10. Functionally, catalyzes the methylation of C-1 in cobalt-precorrin-5B to form cobalt-precorrin-6A. The sequence is that of Cobalt-precorrin-5B C(1)-methyltransferase from Geobacillus kaustophilus (strain HTA426).